The chain runs to 298 residues: Glycine--tRNA ligase alpha subunit (298 aa).

This sequence belongs to the class-II aminoacyl-tRNA synthetase family. As to quaternary structure, tetramer of two alpha and two beta subunits.

The protein localises to the cytoplasm. It catalyses the reaction tRNA(Gly) + glycine + ATP = glycyl-tRNA(Gly) + AMP + diphosphate. This chain is Glycine--tRNA ligase alpha subunit, found in Helicobacter pylori (strain G27).